We begin with the raw amino-acid sequence, 347 residues long: NADH-ubiquinone oxidoreductase chain 2 (347 aa).

A run of 9 helical transmembrane segments spans residues 3-23, 59-79, 93-115, 150-170, 178-198, 200-220, 240-260, 274-294, and 326-346; these read PLAL…TMMS, YFMT…INLM, VASN…HFWV, NTNL…WGGL, ILAY…PFNP, LTLL…MILA, MTIM…LSGF, NSII…YFYT, and LPTL…ISML.

Belongs to the complex I subunit 2 family. As to quaternary structure, core subunit of respiratory chain NADH dehydrogenase (Complex I) which is composed of 45 different subunits. Interacts with TMEM242.

The protein localises to the mitochondrion inner membrane. The catalysed reaction is a ubiquinone + NADH + 5 H(+)(in) = a ubiquinol + NAD(+) + 4 H(+)(out). Its function is as follows. Core subunit of the mitochondrial membrane respiratory chain NADH dehydrogenase (Complex I) which catalyzes electron transfer from NADH through the respiratory chain, using ubiquinone as an electron acceptor. Essential for the catalytic activity and assembly of complex I. In Elephas maximus (Indian elephant), this protein is NADH-ubiquinone oxidoreductase chain 2.